The sequence spans 240 residues: Cysteine-rich venom protein triflin (240 aa).

The signal sequence occupies residues 1–19; it reads MIAFIVLPILAAVLQQSSG. Residues 39–166 enclose the SCP domain; sequence DLHNSLRRSV…KYSYFYVCQY (128 aa). Intrachain disulfides connect C75–C153, C92–C167, C148–C164, C186–C193, C189–C198, C202–C235, C211–C229, and C220–C233. The ShKT domain occupies 202–235; it reads CTRENEFTNCDSLVQKSSCQDNYMKSKCPASCFC.

The protein belongs to the CRISP family. Forms a stable, non-covalent complex with SSP-2. As to expression, expressed by the venom gland.

The protein localises to the secreted. Its function is as follows. Blocks contraction of smooth muscle elicited by high potassium-induced depolarization. May target voltage-gated calcium channels (Cav) on smooth muscle. The polypeptide is Cysteine-rich venom protein triflin (Protobothrops flavoviridis (Habu)).